The chain runs to 1849 residues: MLNKKFKLNFIALTVAYALTPYTEAALVRDDVDYQIFRDFAENKGKFSVGATNVEVRDKKNQSLGSALPNGIPMIDFSVVDVDKRIATLVNPQYVVGVKHVSNGVSELHFGNLNGNMNNGNAKSHRDVSSEENRYYTVEKNNFPTENVTSFTTKEEQDAQKRREDYYMPRLDKFVTEVAPIEASTANNNKGEYNNSDKYPAFVRLGSGSQFIYKKGSRYQLILTEKDKQGNLLRNWDVGGDNLELVGNAYTYGIAGTPYKVNHENNGLIGFGNSKEEHSDPKGILSQDPLTNYAVLGDSGSPLFVYDREKGKWLFLGSYDFWAGYNKKSWQEWNIYKHEFAEKIYQQYSAGSLTGSNTQYTWQATGSTSTITGGGEPLSVDLTDGKDKPNHGKSITLKGSGTLTLNNHIDQGAGGLFFEGDYEVKGTSDSTTWKGAGVSVADGKTVTWKVHNPKYDRLAKIGKGTLVVEGKGKNEGLLKVGDGTVILKQKADANNKVQAFSQVGIVSGRSTLVLNDDKQVDPNSIYFGFRGGRLDLNGNSLTFDHIRNIDDGARVVNHNMTNTSNITITGESLITNPNTITSYNIEAQDDDHPLRIRSIPYRQLYFNQDNRSYYTLKKGASTRSELPQNSGESNENWLYMGRTSDEAKRNVMNHINNERMNGFNGYFGEEETKATQNGKLNVTFNGKSDQNRFLLTGGTNLNGDLNVEKGTLFLSGRPTPHARDIAGISSTKKDPHFTENNEVVVEDDWINRNFKATTMNVTGNASLYSGRNVANITSNITASNNAQVHIGYKTGDTVCVRSDYTGYVTCHNSNLSEKALNSFNPTNLRGNVNLTENASFTLGKANLFGTIQSIGTSQVNLKENSHWHLTGNSNVNQLNLTNGHIHLNAQNDANKVTTYNTLTVNSLSGNGSFYYWVDFTNNKSNKVVVNKSATGNFTLQVADKTGEPNHNELTLFDASNATRNNLEVTLANGSVDRGAWKYKLRNVNGRYDLYNPEVEKRNQTVDTTNITTPNDIQADAPSAQSNNEEIARVETPVPPPAPATESAIASEQPETRPAETAQPAMEETNTANSTETAPKSDTATQTENPNSESVPSETTEKVAENPPQENETVAKNEQEATEPTPQNGEVAKEDQPTVEANTQTNEATQSEGKTEETQTAETKSEPTESVTVSENQPEKTVSQSTEDKVVVEKEEKAKVETEETQKAPQVTSKEPPKQAEPAPEEVPTDTNAEEAQALQQTQPTTVAAAETTSPNSKPAEETQQPSEKTNAEPVTPVVSENTATQPTETEETAKVEKEKTQEVPQVASQESPKQEQPAAKPQAQTKPQAEPARENVLTTKNVGEPQPQAQPQTQSTAVPTTGETAANSKPAAKPQAQAKPQTEPARENVSTVNTKEPQSQTSATVSTEQPAKETSSNVEQPAPENSINTGSATTMTETAEKSDKPQMETVTENDRQPEANTVADNSVANNSESSESKSRRRRSVSQPKETSAEETTVASTQETTVDNSVSTPKPRSRRTRRSVQTNSYEPVELPTENAENAENVQSGNNVANSQPALRNLTSKNTNAVLSNAMAKAQFVALNVGKAVSQHISQLEMNNEGQYNVWISNTSMNKNYSSEQYRRFSSKSTQTQLGWDQTISNNVQLGGVFTYVRNSNNFDKASSKNTLAQVNFYSKYYADNHWYLGIDLGYGKFQSNLQTNNNAKFARHTAQIGLTAGKAFNLGNFAVKPTVGVRYSYLSNADFALAQDRIKVNPISVKTAFAQVDLSYTYHLGEFSITPILSARYDANQGNGKINVSVYDFAYNVENQQQYNAGLKLKYHNVKLSLIGGLTKAKQAEKQKTAEVKLSFSF.

The signal sequence occupies residues 1 to 25 (MLNKKFKLNFIALTVAYALTPYTEA). Residues 26-343 (ALVRDDVDYQ…NIYKHEFAEK (318 aa)) enclose the Peptidase S6 domain. S299 is an active-site residue. The disordered stretch occupies residues 998 to 1538 (VEKRNQTVDT…EPVELPTENA (541 aa)). The span at 1004–1015 (TVDTTNITTPND) shows a compositional bias: polar residues. The span at 1066–1077 (EETNTANSTETA) shows a compositional bias: low complexity. 2 stretches are compositionally biased toward polar residues: residues 1079–1097 (KSDT…VPSE) and 1138–1151 (VEAN…TQSE). A compositionally biased stretch (basic and acidic residues) spans 1152 to 1166 (GKTEETQTAETKSEP). Residues 1167-1184 (TESVTVSENQPEKTVSQS) show a composition bias toward polar residues. Residues 1185–1205 (TEDKVVVEKEEKAKVETEETQ) are compositionally biased toward basic and acidic residues. The segment covering 1237–1268 (ALQQTQPTTVAAAETTSPNSKPAEETQQPSEK) has biased composition (polar residues). Over residues 1291 to 1301 (ETAKVEKEKTQ) the composition is skewed to basic and acidic residues. Low complexity-rich tracts occupy residues 1314-1330 (QEQP…PQAE), 1345-1361 (PQPQ…VPTT), and 1369-1381 (KPAA…AKPQ). Residues 1388–1437 (NVSTVNTKEPQSQTSATVSTEQPAKETSSNVEQPAPENSINTGSATTMTE) show a composition bias toward polar residues. The span at 1438 to 1457 (TAEKSDKPQMETVTENDRQP) shows a compositional bias: basic and acidic residues. The span at 1493 to 1513 (EETTVASTQETTVDNSVSTPK) shows a compositional bias: low complexity. Positions 1597-1849 (NNEGQYNVWI…TAEVKLSFSF (253 aa)) constitute an Autotransporter domain.

The protein localises to the periplasm. Its subcellular location is the secreted. It is found in the cell surface. It localises to the cell outer membrane. It catalyses the reaction Cleavage of immunoglobulin A molecules at certain Pro-|-Xaa bonds in the hinge region. No small molecule substrates are known.. Virulence factor; cleaves host immunoglobulin A producing intact Fc and Fab fragments. In Haemophilus influenzae, this protein is Immunoglobulin A1 protease autotransporter (iga).